We begin with the raw amino-acid sequence, 33 residues long: Kunitz-type serine protease inhibitor hainantoxin F7-25.66 (33 aa).

The 30-residue stretch at 4–33 (CRLPSDRGRCKASFERWYFNGRTCAKFIYG) folds into the BPTI/Kunitz inhibitor domain.

This sequence belongs to the venom Kunitz-type family. 02 (native) subfamily. As to expression, expressed by the venom gland.

It is found in the secreted. In terms of biological role, serine protease inhibitor that inhibits trypsin at a molar ratio of 1:1. This chain is Kunitz-type serine protease inhibitor hainantoxin F7-25.66, found in Cyriopagopus hainanus (Chinese bird spider).